Consider the following 137-residue polypeptide: Nucleoside diphosphate kinase (137 aa).

ATP contacts are provided by lysine 9, phenylalanine 57, arginine 85, threonine 91, arginine 102, and asparagine 112. Histidine 115 serves as the catalytic Pros-phosphohistidine intermediate.

It belongs to the NDK family. In terms of assembly, homotetramer. The cofactor is Mg(2+).

It is found in the cytoplasm. The enzyme catalyses a 2'-deoxyribonucleoside 5'-diphosphate + ATP = a 2'-deoxyribonucleoside 5'-triphosphate + ADP. The catalysed reaction is a ribonucleoside 5'-diphosphate + ATP = a ribonucleoside 5'-triphosphate + ADP. In terms of biological role, major role in the synthesis of nucleoside triphosphates other than ATP. The ATP gamma phosphate is transferred to the NDP beta phosphate via a ping-pong mechanism, using a phosphorylated active-site intermediate. The sequence is that of Nucleoside diphosphate kinase from Campylobacter fetus subsp. fetus (strain 82-40).